The following is a 321-amino-acid chain: MYRGGRMWGMSHSLPSGMSSYAFSPQDTDFSSYPSTIGRQHSQQSQRYYQNNNCGLGSVGNMANSTNSLNSGTNNSGTNLIVNYLPQDMQDRELYSLFRTIGPINTCRIMRDYKTGYSYGYGFVDFGSEADALRAINNLNGITVRNKRIKVSFARPGGEQLRDTNLYVTNLSRSITDEQLETIFGKYGQIVQKNILRDKHTGTPRGVAFIRFNKREEAQEAISALNNVIPEGGTQPLTVRVAEEHGKSKGHVYMAPNQPPHGNMGHGNMGNMGHGNMGMAGGSGMNLNNMNAFNGMNQMVHRGRQKHSYQRKIHPYNPNFL.

RRM domains are found at residues 78–156 (TNLI…FARP) and 164–244 (TNLY…VAEE).

As to expression, expressed in gonads and somatic tissues of both sexes. In the ovary, expressed in the last egg chamber of each ovariole. Highly expressed in nurse cells with low expression found in oocytes. Highly expressed in testis with lower expression in testis sheath and vas deferentia.

It is found in the nucleus. Unknown; apparently not involved in somatic sex determination. The protein is Sex-lethal homolog (SXL) of Megaselia scalaris (Humpbacked fly).